The sequence spans 177 residues: ATP synthase subunit delta (177 aa).

Belongs to the ATPase delta chain family. As to quaternary structure, F-type ATPases have 2 components, F(1) - the catalytic core - and F(0) - the membrane proton channel. F(1) has five subunits: alpha(3), beta(3), gamma(1), delta(1), epsilon(1). F(0) has three main subunits: a(1), b(2) and c(10-14). The alpha and beta chains form an alternating ring which encloses part of the gamma chain. F(1) is attached to F(0) by a central stalk formed by the gamma and epsilon chains, while a peripheral stalk is formed by the delta and b chains.

Its subcellular location is the cell inner membrane. F(1)F(0) ATP synthase produces ATP from ADP in the presence of a proton or sodium gradient. F-type ATPases consist of two structural domains, F(1) containing the extramembraneous catalytic core and F(0) containing the membrane proton channel, linked together by a central stalk and a peripheral stalk. During catalysis, ATP synthesis in the catalytic domain of F(1) is coupled via a rotary mechanism of the central stalk subunits to proton translocation. Its function is as follows. This protein is part of the stalk that links CF(0) to CF(1). It either transmits conformational changes from CF(0) to CF(1) or is implicated in proton conduction. The chain is ATP synthase subunit delta from Herminiimonas arsenicoxydans.